The primary structure comprises 204 residues: ATP phosphoribosyltransferase (204 aa).

This sequence belongs to the ATP phosphoribosyltransferase family. Short subfamily. Heteromultimer composed of HisG and HisZ subunits.

It is found in the cytoplasm. It carries out the reaction 1-(5-phospho-beta-D-ribosyl)-ATP + diphosphate = 5-phospho-alpha-D-ribose 1-diphosphate + ATP. It functions in the pathway amino-acid biosynthesis; L-histidine biosynthesis; L-histidine from 5-phospho-alpha-D-ribose 1-diphosphate: step 1/9. Its function is as follows. Catalyzes the condensation of ATP and 5-phosphoribose 1-diphosphate to form N'-(5'-phosphoribosyl)-ATP (PR-ATP). Has a crucial role in the pathway because the rate of histidine biosynthesis seems to be controlled primarily by regulation of HisG enzymatic activity. This Hydrogenobaculum sp. (strain Y04AAS1) protein is ATP phosphoribosyltransferase.